The sequence spans 619 residues: Eukaryotic translation initiation factor 3 subunit D (619 aa).

Residues 99–160 (QKQPHQRGRF…KWGARPPPKI (62 aa)) are disordered. Residues 100–121 (KQPHQRGRFRGNLRNQRGRGRG) are compositionally biased toward basic residues. Residues 288 to 302 (EFDLLTVNETAIEPP) form an RNA gate region. The tract at residues 588-619 (TPAATETVATATTEATTPTTATKTTAPAAAQK) is disordered.

Belongs to the eIF-3 subunit D family. Component of the eukaryotic translation initiation factor 3 (eIF-3) complex.

It localises to the cytoplasm. Functionally, mRNA cap-binding component of the eukaryotic translation initiation factor 3 (eIF-3) complex, which is involved in protein synthesis of a specialized repertoire of mRNAs and, together with other initiation factors, stimulates binding of mRNA and methionyl-tRNAi to the 40S ribosome. The eIF-3 complex specifically targets and initiates translation of a subset of mRNAs involved in cell proliferation. In the eIF-3 complex, eif3d specifically recognizes and binds the 7-methylguanosine cap of a subset of mRNAs. This chain is Eukaryotic translation initiation factor 3 subunit D, found in Aedes aegypti (Yellowfever mosquito).